The following is a 570-amino-acid chain: KH homology domain-containing protein 4 (570 aa).

Positions 1 to 29 (MSFGVPHSGGSRRSKWDQAGPDADAGSAP) are disordered. KH domains follow at residues 77 to 157 (DDLV…RIKE) and 210 to 292 (VFVG…NLLQ). Over residues 391-407 (PPTAPVPPKLTAPPNPP) the composition is skewed to pro residues. Disordered stretches follow at residues 391-410 (PPTA…PQKR), 438-500 (AGMP…EPQV), and 512-570 (GDSS…WMAP). Positions 427–497 (QHGPIHMTNL…ESPSAPSLLE (71 aa)) are required for nuclear retention. Over residues 553 to 562 (TQTAPQPTQQ) the composition is skewed to low complexity.

This sequence belongs to the KHDC4 family. In terms of assembly, interacts with PRPF19.

Its subcellular location is the nucleus. It localises to the cytoplasm. RNA-binding protein involved in pre-mRNA splicing. Interacts with the PRP19C/Prp19 complex/NTC/Nineteen complex which is part of the spliceosome. Involved in regulating splice site selection. Binds preferentially RNA with A/C rich sequences and poly-C stretches. This is KH homology domain-containing protein 4 (khdc4) from Danio rerio (Zebrafish).